We begin with the raw amino-acid sequence, 343 residues long: Probable 3',5'-cyclic-nucleotide phosphodiesterase (343 aa).

Positions 1–36 (MKYLSIKSASDKIKSGLLKTGVILSFSLFSSLSTAA) are cleaved as a signal peptide.

Belongs to the cyclic nucleotide phosphodiesterase class-II family.

It localises to the periplasm. The catalysed reaction is a nucleoside 3',5'-cyclic phosphate + H2O = a nucleoside 5'-phosphate + H(+). In Yersinia pestis, this protein is Probable 3',5'-cyclic-nucleotide phosphodiesterase (cpdP).